An 866-amino-acid chain; its full sequence is Primer-independent DNA polymerase PolB (866 aa).

The tract at residues 50–286 (SDLTLHIGFD…DRVPATIGAM (237 aa)) is exonuclease domain. The tract at residues 287–385 (AVSRFTKTLK…GLLDILTPDY (99 aa)) is palm1 domain. The interval 386 to 481 (GNIRLSKNPD…NSESTSVFLP (96 aa)) is TPR1 domain. Residues 482-522 (FVQQVRENRNRHIKGSLEEKFWKEIGNSLYGKLAQGLRAKT) form a fingers domain region. The segment at 523–549 (AFDTARGLNRSLPPSSVTQPFFAAHVT) is TPR2 domain. A palm2 domain region spans residues 550 to 678 (GFIRAVVGEL…PGQTLSRSTL (129 aa)). The segment at 679–866 (ISTREMWLSE…RKYPTFCLPV (188 aa)) is thumb domain.

Requires Mn(2+) as cofactor.

The enzyme catalyses DNA(n) + a 2'-deoxyribonucleoside 5'-triphosphate = DNA(n+1) + diphosphate. In terms of biological role, DNA polymerase with primer-independent templated DNA polymerization activity, primer-dependent DNA polymerization activity with strand displacement, translesion synthesis activity across non-bulky base damage, 3'-5' exodeoxyribonuclease activity, and de novo primer synthesis activity. The enzyme is processive and faithful. Translation synthesis across abasic sites is coupled to de novo primer synthesis. Overexpression of wild-type protein increases survival of cells upon mitomycin C or UV treatment. The protein is Primer-independent DNA polymerase PolB (pi-polB) of Escherichia coli.